A 305-amino-acid chain; its full sequence is D-alanine--D-alanine ligase (305 aa).

One can recognise an ATP-grasp domain in the interval 104–300 (RALFASAGIP…FPELVRWMVE (197 aa)). 131-181 (LPRPFVVKPLNEGSSVGVFIVRDNQPSPLPDWPFDADEVLVESFIPGRELT) lines the ATP pocket. Mg(2+) is bound by residues D249, E267, and N269.

The protein belongs to the D-alanine--D-alanine ligase family. Requires Mg(2+) as cofactor. The cofactor is Mn(2+).

It localises to the cytoplasm. The catalysed reaction is 2 D-alanine + ATP = D-alanyl-D-alanine + ADP + phosphate + H(+). Its pathway is cell wall biogenesis; peptidoglycan biosynthesis. Its function is as follows. Cell wall formation. This Paramagnetospirillum magneticum (strain ATCC 700264 / AMB-1) (Magnetospirillum magneticum) protein is D-alanine--D-alanine ligase.